A 448-amino-acid polypeptide reads, in one-letter code: Probable glycine dehydrogenase (decarboxylating) subunit 1 (448 aa).

It belongs to the GcvP family. N-terminal subunit subfamily. The glycine cleavage system is composed of four proteins: P, T, L and H. In this organism, the P 'protein' is a heterodimer of two subunits.

It carries out the reaction N(6)-[(R)-lipoyl]-L-lysyl-[glycine-cleavage complex H protein] + glycine + H(+) = N(6)-[(R)-S(8)-aminomethyldihydrolipoyl]-L-lysyl-[glycine-cleavage complex H protein] + CO2. Functionally, the glycine cleavage system catalyzes the degradation of glycine. The P protein binds the alpha-amino group of glycine through its pyridoxal phosphate cofactor; CO(2) is released and the remaining methylamine moiety is then transferred to the lipoamide cofactor of the H protein. In Bacillus velezensis (strain DSM 23117 / BGSC 10A6 / LMG 26770 / FZB42) (Bacillus amyloliquefaciens subsp. plantarum), this protein is Probable glycine dehydrogenase (decarboxylating) subunit 1.